Reading from the N-terminus, the 159-residue chain is MARRNKAKKREISPDSRYGSVLLMRFINTIMKCGKKSTAEKIIYDALSLAEKKIGEGGLSIFETAVGNVTPSIEVRSRRIGGATYQVPVEVRQDRAVSLALRWIAKATSAARKKSGKTTVDCLQSEILDAYNKRGGAFKMCEEKYKMAEANKAFSHLRF.

This sequence belongs to the universal ribosomal protein uS7 family. In terms of assembly, part of the 30S ribosomal subunit. Contacts proteins S9 and S11.

Functionally, one of the primary rRNA binding proteins, it binds directly to 16S rRNA where it nucleates assembly of the head domain of the 30S subunit. Is located at the subunit interface close to the decoding center, probably blocks exit of the E-site tRNA. The protein is Small ribosomal subunit protein uS7 of Wolbachia pipientis wMel.